Here is a 582-residue protein sequence, read N- to C-terminus: MNIKNILSERVSAAMVAAGLPEGTNPAISLSNRPQFGDYQANGVMGAAKKLKTNPRELATKVVAELDLDGIASKIELAGPGFINIHLDESWLAAQLNEVAQDDFIGVAQRGTTPGDESQTVVVDYSAPNLAKEMHVGHLRSTIIGDAVVRALEFRGDKVIRQNHMGDWGTQFGMLIAHLSDKLASDEVAETALADLENFYREAKVRFDNEEGFADRARADVVKLQSGDEACAKLWQQFIDISITHSEEIYAKLNVSLKRSDIMGESAYNDDLSTVVDELMAKKIAEESQGAKVVFINEMANKDGEAPVFIVQKSGGGFLYATTDLSACRYRSGKLAANRIIIFTDARQALHFKQVEIVARKAGLLPENVGYQHCPFGMMMGDDGKPFKTRTGGTIKLAELLDESIVRAAALIKEKNPDITDTDLTEISKKVGIGAVKFADLSKNRTSDYIFDWKTMLSFEGATAPYLQYAYSRIQSIFSKAGTVKNDAVINIIEPQEKALALKLLQLEDVVDAVISECTPNLLCNYLYELASLYMSFYEACPILKEGISGEVKASRLALCNVVADTLKQGLDILGIETMERM.

The 'HIGH' region signature appears at 128–138; sequence PNLAKEMHVGH.

The protein belongs to the class-I aminoacyl-tRNA synthetase family. As to quaternary structure, monomer.

Its subcellular location is the cytoplasm. The enzyme catalyses tRNA(Arg) + L-arginine + ATP = L-arginyl-tRNA(Arg) + AMP + diphosphate. In Colwellia psychrerythraea (strain 34H / ATCC BAA-681) (Vibrio psychroerythus), this protein is Arginine--tRNA ligase.